We begin with the raw amino-acid sequence, 299 residues long: NmrA-like family domain-containing protein 1 (299 aa).

Residues 11 to 16, 37 to 41, 58 to 59, 79 to 81, lysine 92, lysine 133, and 155 to 158 contribute to the NADP(+) site; these read GATGAQ, RDPGQ, DQ, TNY, and YFEN. The interaction with ASS1 stretch occupies residues 153-189; sequence PCYFENLLSYFLPQKAPDGRSYLLSLPMGDVPIDGMS.

The protein belongs to the NmrA-type oxidoreductase family. As to quaternary structure, homodimer. Interacts with ASS1. Interaction is enhanced by low NADPH/NADP(+) ratios, which results in inhibition of ASS1 activity.

It is found in the cytoplasm. Its subcellular location is the perinuclear region. The protein localises to the nucleus. Functionally, redox sensor protein. Undergoes restructuring and subcellular redistribution in response to changes in intracellular NADPH/NADP(+) levels. At low NADPH concentrations the protein is found mainly as a monomer, and binds argininosuccinate synthase (ASS1), the enzyme involved in nitric oxide synthesis. Association with ASS1 impairs its activity and reduces the production of nitric oxide, which subsecuently prevents apoptosis. Under normal NADPH concentrations, the protein is found as a dimer and hides the binding site for ASS1. The homodimer binds one molecule of NADPH. Has higher affinity for NADPH than for NADP(+). Binding to NADPH is necessary to form a stable dimer. The polypeptide is NmrA-like family domain-containing protein 1 (NMRAL1) (Bos taurus (Bovine)).